A 134-amino-acid polypeptide reads, in one-letter code: Large ribosomal subunit protein uL16c (134 aa).

The segment covering 1-17 (MLSPKRTRFRKQHRGRM) has biased composition (basic residues). The tract at residues 1–21 (MLSPKRTRFRKQHRGRMKGIS) is disordered.

Belongs to the universal ribosomal protein uL16 family. Part of the 50S ribosomal subunit.

Its subcellular location is the plastid. The protein resides in the chloroplast. This Solanum bulbocastanum (Wild potato) protein is Large ribosomal subunit protein uL16c.